A 412-amino-acid polypeptide reads, in one-letter code: uncharacterized protein (412 aa).

3 disordered regions span residues 150-171 (NTPG…QLGD), 177-196 (QITS…QQQQ), and 302-412 (QAQQ…PLNP). Residues 156–168 (QAQQQQQQQQQQQ) show a composition bias toward low complexity. Composition is skewed to polar residues over residues 177–187 (QITSSNNSGNS) and 310–321 (MGSSPTHSSPTI). The span at 335–345 (GGIINTNTNLN) shows a compositional bias: low complexity. Positions 350-363 (VSPNQPMPNSSPIL) are enriched in polar residues. 2 stretches are compositionally biased toward low complexity: residues 364–373 (PTNASSVVPP) and 381–394 (TSNN…TTSP).

This is an uncharacterized protein from Dictyostelium discoideum (Social amoeba).